The primary structure comprises 53 residues: Insulin (53 aa).

Residues 1 to 30 (DVEPLLGFLSPKSGQENEVDDFPYKGQGEL) constitute a propeptide, c peptide. Cys-38 and Cys-43 are disulfide-bonded.

Belongs to the insulin family. Heterodimer of a B chain and an A chain linked by two disulfide bonds.

It is found in the secreted. Functionally, insulin decreases blood glucose concentration. It increases cell permeability to monosaccharides, amino acids and fatty acids. It accelerates glycolysis, the pentose phosphate cycle, and glycogen synthesis in liver. This is Insulin (ins) from Anguilla anguilla (European freshwater eel).